A 234-amino-acid chain; its full sequence is Large ribosomal subunit protein eL6 (234 aa).

The protein belongs to the eukaryotic ribosomal protein eL6 family.

The protein is Large ribosomal subunit protein eL6 (RPL6) of Mesembryanthemum crystallinum (Common ice plant).